We begin with the raw amino-acid sequence, 372 residues long: PqqA peptide cyclase (372 aa).

The 216-residue stretch at 4-219 folds into the Radical SAM core domain; it reads APPPLSVLLE…VDTARRELGD (216 aa). [4Fe-4S] cluster is bound by residues Cys18, Cys22, and Cys25. Residues 342 to 372 are disordered; that stretch reads ATAEREAAAPAPEFIYRRPERPAPATADTLE.

It belongs to the radical SAM superfamily. PqqE family. As to quaternary structure, interacts with PqqD. The interaction is necessary for activity of PqqE. It depends on [4Fe-4S] cluster as a cofactor.

The enzyme catalyses [PQQ precursor protein] + S-adenosyl-L-methionine = E-Y cross-linked-[PQQ precursor protein] + 5'-deoxyadenosine + L-methionine + H(+). The protein operates within cofactor biosynthesis; pyrroloquinoline quinone biosynthesis. Functionally, catalyzes the cross-linking of a glutamate residue and a tyrosine residue in the PqqA protein as part of the biosynthesis of pyrroloquinoline quinone (PQQ). The sequence is that of PqqA peptide cyclase from Xanthomonas oryzae pv. oryzae (strain MAFF 311018).